The sequence spans 402 residues: Dihydrolipoyllysine-residue acetyltransferase component of pyruvate dehydrogenase complex (402 aa).

The region spanning 1–69 (MPDIGLEEVE…KTSSIIMIFK (69 aa)) is the Lipoyl-binding domain. Position 35 is an N6-lipoyllysine (K35). Residues 109–146 (HATPVVRRLARHLNVDLKNITPSGPKNRILKEDIELYI) form the Peripheral subunit-binding (PSBD) domain. Residue H375 is part of the active site.

Belongs to the 2-oxoacid dehydrogenase family. In terms of assembly, forms a 24-polypeptide structural core with octahedral symmetry. The cofactor is (R)-lipoate.

The enzyme catalyses N(6)-[(R)-dihydrolipoyl]-L-lysyl-[protein] + acetyl-CoA = N(6)-[(R)-S(8)-acetyldihydrolipoyl]-L-lysyl-[protein] + CoA. In terms of biological role, the pyruvate dehydrogenase complex catalyzes the overall conversion of pyruvate to acetyl-CoA and CO(2). It contains multiple copies of three enzymatic components: pyruvate dehydrogenase (E1), dihydrolipoamide acetyltransferase (E2) and lipoamide dehydrogenase (E3). The sequence is that of Dihydrolipoyllysine-residue acetyltransferase component of pyruvate dehydrogenase complex (aceF) from Buchnera aphidicola subsp. Schizaphis graminum (strain Sg).